A 252-amino-acid chain; its full sequence is Protein IRON-RELATED TRANSCRIPTION FACTOR 3 (252 aa).

Positions 36–49 (PRKVHKSEREKLKR) are basic motif. The region spanning 36-86 (PRKVHKSEREKLKRGHLNDLFGELGNMLEADRQSNGKACILTDTTRILRDL) is the bHLH domain. The tract at residues 50–86 (GHLNDLFGELGNMLEADRQSNGKACILTDTTRILRDL) is helix-loop-helix motif. A coiled-coil region spans residues 76 to 131 (LTDTTRILRDLLSQVKSLRQENSTLQNESNYVTMERNELQDENGALRSEISDLQNE). Residues 135-252 (RATGSPGWGH…GLPRMEDEQM (118 aa)) form a disordered region. Residues 162 to 176 (PSQQPMQPSPMTTST) show a composition bias toward low complexity. A compositionally biased stretch (acidic residues) spans 208-219 (PAEDPEPSEDQE).

It belongs to the bHLH protein family.

It localises to the nucleus. In terms of biological role, transcription factor that acts as a negative regulator of the iron deficiency response. Suppresses the induction of iron deficiency responsive genes, such as NAS1, NAS2, IRO2, IRT1, YSL15, and NRAMP1. This is Protein IRON-RELATED TRANSCRIPTION FACTOR 3 from Oryza sativa subsp. japonica (Rice).